We begin with the raw amino-acid sequence, 315 residues long: Apolipoprotein F (315 aa).

Positions 1-24 (MHSLRLILMSIQLLCYLLLCPVDA) are cleaved as a signal peptide. Positions 25–154 (TSHGEATSVS…EQPGPKRAKR (130 aa)) are excised as a propeptide.

The protein belongs to the apolipoprotein F family. As to expression, liver.

The protein resides in the secreted. Its function is as follows. Minor apolipoprotein that associates with LDL. Inhibits cholesteryl ester transfer protein (CETP) activity and appears to be an important regulator of cholesterol transport. Also associates to a lesser degree with VLDL, Apo-AI and Apo-AII. The protein is Apolipoprotein F (Apof) of Mus musculus (Mouse).